A 228-amino-acid chain; its full sequence is HTH-type transcriptional regulator ArcR (228 aa).

Position 22-141 (22-141 (SYINIPVGVL…VKLFSLLSET (120 aa))) interacts with a nucleoside 3',5'-cyclic phosphate. Residues 155–228 (KLAKERVTKI…SKNWLVSKDL (74 aa)) enclose the HTH crp-type domain. The segment at residues 188–207 (IQLLSDMAGISRETTSHIIN) is a DNA-binding region (H-T-H motif).

Its subcellular location is the cytoplasm. Functionally, positively regulates the expression of the arcABDCR operon under anaerobic conditions, thus playing an essential role in arginine catabolism. May also control the expression of genes encoding proteins which are involved in anaerobic metabolism. Can bind cyclic AMP. The sequence is that of HTH-type transcriptional regulator ArcR (arcR) from Staphylococcus epidermidis (strain ATCC 12228 / FDA PCI 1200).